The chain runs to 643 residues: MSRPSTPLLDKVPTPDRLRALPERDLPQLAEELRTELIDAVSTTGGHLGAGLGVVELTVALHHVFNTPYDRIIWDVGHQAYPHKILTGRRDRIRTLRQAGGLSGFTKRAESEYDPFGAAHSSTSISAGLGMAVASELSGEKRNVIAVIGDGSMSAGMAYEAMNNAGALDARLIVILNDNDMSIAPPTGAMSAYLARLVSGRTYRSVREAAKQVAQKLPKFLQDKARKSEEYARAFFTGGTLFEELGFYYVGPIDGHNLDHLLPVLKNVRDTQKGPVLIHVVTQKGKGYAPAEAAADKYHGVNKFDVITGKQAKPPANAPSYTKIFGTSLIEEARHDDKIVAVTAAMPTGTGLDLFGEAFPKRVFDVGIAEQHAVTFAAGLASEGYKPFCAIYSTFLQRGYDQVVHDVSIQNLPVRFPIDRAGLVGADGPTHAGSFDTGFLAALPGFVVMAASDEAELRHMVRTAAEYDEGPISFRYPRGDGVGVDLPERGSVLEIGKGRIVREGTKVALLSFGTRLQECLAAAEELGAAGLSTTVVDARFAKPLDHDLIRRLAREHEVLVMVEEGAVGGFGSHVLQFLATDGLLDRGLKVRALTLPDIYQDHGKPDAMYAEAGLDRTGIVRTVFAALHRDELGHEALPTPFRA.

Residues histidine 78 and 119-121 (AHS) each bind thiamine diphosphate. Aspartate 150 lines the Mg(2+) pocket. Thiamine diphosphate-binding positions include 151 to 152 (GS), asparagine 179, tyrosine 288, and glutamate 370. Asparagine 179 contributes to the Mg(2+) binding site.

The protein belongs to the transketolase family. DXPS subfamily. Homodimer. It depends on Mg(2+) as a cofactor. Requires thiamine diphosphate as cofactor.

The enzyme catalyses D-glyceraldehyde 3-phosphate + pyruvate + H(+) = 1-deoxy-D-xylulose 5-phosphate + CO2. It functions in the pathway metabolic intermediate biosynthesis; 1-deoxy-D-xylulose 5-phosphate biosynthesis; 1-deoxy-D-xylulose 5-phosphate from D-glyceraldehyde 3-phosphate and pyruvate: step 1/1. Its function is as follows. Catalyzes the acyloin condensation reaction between C atoms 2 and 3 of pyruvate and glyceraldehyde 3-phosphate to yield 1-deoxy-D-xylulose-5-phosphate (DXP). This Brucella ovis (strain ATCC 25840 / 63/290 / NCTC 10512) protein is 1-deoxy-D-xylulose-5-phosphate synthase.